A 291-amino-acid chain; its full sequence is ATP synthase gamma chain (291 aa).

It belongs to the ATPase gamma chain family. In terms of assembly, F-type ATPases have 2 components, CF(1) - the catalytic core - and CF(0) - the membrane proton channel. CF(1) has five subunits: alpha(3), beta(3), gamma(1), delta(1), epsilon(1). CF(0) has three main subunits: a, b and c.

It is found in the cell inner membrane. Functionally, produces ATP from ADP in the presence of a proton gradient across the membrane. The gamma chain is believed to be important in regulating ATPase activity and the flow of protons through the CF(0) complex. This chain is ATP synthase gamma chain, found in Sulfurihydrogenibium sp. (strain YO3AOP1).